Consider the following 239-residue polypeptide: Ribulose-1,5-bisphosphate 5-phosphatase (239 aa).

Aspartate 8 acts as the Nucleophile in catalysis. Residues aspartate 8, aspartate 10, and aspartate 184 each coordinate Mg(2+). The Proton donor role is filled by aspartate 10. Residues 205–239 (PSEESDATESADRAATERQADHSIDTLGELTDLVS) form a disordered region. Over residues 214-228 (SADRAATERQADHSI) the composition is skewed to basic and acidic residues.

This sequence belongs to the HAD-like hydrolase superfamily. Mg(2+) is required as a cofactor. Mn(2+) serves as cofactor. It depends on Co(2+) as a cofactor. The cofactor is Ni(2+).

The enzyme catalyses D-ribulose 1,5-bisphosphate + H2O = D-ribulose 1-phosphate + phosphate. With respect to regulation, requires both monovalent and divalent ions for optimal activity. Optimal KCl concentration is higher than 2.5 M. Functionally, phosphatase involved in the non-carboxylating pentose bisphosphate pathway, a nucleoside degradation pathway present in some halophilic archaea. Catalyzes the dephosphorylation of ribulose 1,5-bisphosphate (RuBP) to ribulose 1-phosphate (Ru1P). Shows a strict substrate specificity toward RuBP. This is Ribulose-1,5-bisphosphate 5-phosphatase from Halopiger xanaduensis (strain DSM 18323 / JCM 14033 / SH-6).